The chain runs to 251 residues: Imidazole glycerol phosphate synthase subunit HisF (251 aa).

Active-site residues include Asp-11 and Asp-130.

This sequence belongs to the HisA/HisF family. As to quaternary structure, heterodimer of HisH and HisF.

The protein resides in the cytoplasm. The catalysed reaction is 5-[(5-phospho-1-deoxy-D-ribulos-1-ylimino)methylamino]-1-(5-phospho-beta-D-ribosyl)imidazole-4-carboxamide + L-glutamine = D-erythro-1-(imidazol-4-yl)glycerol 3-phosphate + 5-amino-1-(5-phospho-beta-D-ribosyl)imidazole-4-carboxamide + L-glutamate + H(+). It participates in amino-acid biosynthesis; L-histidine biosynthesis; L-histidine from 5-phospho-alpha-D-ribose 1-diphosphate: step 5/9. Its function is as follows. IGPS catalyzes the conversion of PRFAR and glutamine to IGP, AICAR and glutamate. The HisF subunit catalyzes the cyclization activity that produces IGP and AICAR from PRFAR using the ammonia provided by the HisH subunit. This chain is Imidazole glycerol phosphate synthase subunit HisF, found in Flavobacterium psychrophilum (strain ATCC 49511 / DSM 21280 / CIP 103535 / JIP02/86).